A 355-amino-acid polypeptide reads, in one-letter code: UDP-3-O-acylglucosamine N-acyltransferase (355 aa).

H258 functions as the Proton acceptor in the catalytic mechanism.

It belongs to the transferase hexapeptide repeat family. LpxD subfamily. As to quaternary structure, homotrimer.

The catalysed reaction is a UDP-3-O-[(3R)-3-hydroxyacyl]-alpha-D-glucosamine + a (3R)-hydroxyacyl-[ACP] = a UDP-2-N,3-O-bis[(3R)-3-hydroxyacyl]-alpha-D-glucosamine + holo-[ACP] + H(+). Its pathway is bacterial outer membrane biogenesis; LPS lipid A biosynthesis. Catalyzes the N-acylation of UDP-3-O-acylglucosamine using 3-hydroxyacyl-ACP as the acyl donor. Is involved in the biosynthesis of lipid A, a phosphorylated glycolipid that anchors the lipopolysaccharide to the outer membrane of the cell. The polypeptide is UDP-3-O-acylglucosamine N-acyltransferase (Bradyrhizobium sp. (strain BTAi1 / ATCC BAA-1182)).